Here is a 208-residue protein sequence, read N- to C-terminus: LexA repressor (208 aa).

The segment at residues 29–49 is a DNA-binding region (H-T-H motif); that stretch reads VREICSAVGLSSTSTVHGHIS. Active-site for autocatalytic cleavage activity residues include Ser129 and Lys167.

This sequence belongs to the peptidase S24 family. In terms of assembly, homodimer.

The enzyme catalyses Hydrolysis of Ala-|-Gly bond in repressor LexA.. In terms of biological role, represses a number of genes involved in the response to DNA damage (SOS response), including recA and lexA. In the presence of single-stranded DNA, RecA interacts with LexA causing an autocatalytic cleavage which disrupts the DNA-binding part of LexA, leading to derepression of the SOS regulon and eventually DNA repair. The protein is LexA repressor of Limosilactobacillus reuteri (strain DSM 20016) (Lactobacillus reuteri).